Reading from the N-terminus, the 55-residue chain is Large ribosomal subunit protein bL33 (55 aa).

It belongs to the bacterial ribosomal protein bL33 family.

In Agrobacterium fabrum (strain C58 / ATCC 33970) (Agrobacterium tumefaciens (strain C58)), this protein is Large ribosomal subunit protein bL33.